The chain runs to 600 residues: MYYTEESLETLKHSIDIVSVLGEYVHLKRSGADYKACCPFHDEKTPSFIVYPTRGHYHCYGCGEHGDAINFLMKQQGYSFSEAVLFLAKKFHVDLVIKTKTKESSGQDSKECLRRINKEAERFFQYCLLCLPEGGEALSYLYKRGFSLDTIDRFQIGYAPEQRVFVRAMEERGISVKQLEWAGYLSKDWFLFAQRIMFPIQDSLGYTIGFSSRRFKEGGKGGKYINSPETLLFKKSRVLYGLQFSRKRIAKEKRVILVEGQADCLQMIDFGFNCTLAAQGTSFTETHVKELVKLGVSKAYLLFDGDAAGEKASLRVGDLCQVAGIAVIVCRLPSGQDPDSFLMQRGPEELRELLDRGEDYLSFLVWHKIRSYEQFTPREKARVVEEVIQQVQHWGSPIMIHEYLRQLASLVKVPEAAVLSYLSSIKSATEDKGKKADAKEVCPDPEATAVAYKGGKASKKISPRMILEADVIRCLLFAKPEEEFVPATVRHYLSPEEFHCIEYRSIFVMAMNHYNEKHMLPSMDDMMALVWGTEAMTLLVDRRINTELMRDIVVQAIQKLLDKHWRDRKRNFCHQMGKELDSLQEYVRLSEERIKVSLVS.

The CHC2-type zinc-finger motif lies at Cys-38 to Cys-62. One can recognise a Toprim domain in the interval Lys-253–Pro-333. Glu-259, Asp-304, and Asp-306 together coordinate Mg(2+).

It belongs to the DnaG primase family. Monomer. Interacts with DnaB. Zn(2+) serves as cofactor. Requires Mg(2+) as cofactor.

It carries out the reaction ssDNA + n NTP = ssDNA/pppN(pN)n-1 hybrid + (n-1) diphosphate.. In terms of biological role, RNA polymerase that catalyzes the synthesis of short RNA molecules used as primers for DNA polymerase during DNA replication. This Chlamydia muridarum (strain MoPn / Nigg) protein is DNA primase.